A 284-amino-acid polypeptide reads, in one-letter code: Nucleotide-binding protein TTE1834 (284 aa).

Position 8–15 (8–15) interacts with ATP; the sequence is GLSGAGKT. 58 to 61 is a binding site for GTP; the sequence is DLRG.

Belongs to the RapZ-like family.

Displays ATPase and GTPase activities. In Caldanaerobacter subterraneus subsp. tengcongensis (strain DSM 15242 / JCM 11007 / NBRC 100824 / MB4) (Thermoanaerobacter tengcongensis), this protein is Nucleotide-binding protein TTE1834.